The sequence spans 426 residues: Histidine--tRNA ligase (426 aa).

The protein belongs to the class-II aminoacyl-tRNA synthetase family.

It localises to the cytoplasm. The catalysed reaction is tRNA(His) + L-histidine + ATP = L-histidyl-tRNA(His) + AMP + diphosphate + H(+). This Sulfurisphaera tokodaii (strain DSM 16993 / JCM 10545 / NBRC 100140 / 7) (Sulfolobus tokodaii) protein is Histidine--tRNA ligase.